Here is a 237-residue protein sequence, read N- to C-terminus: MQLTEQQQDKLSKVQLEESWKRSLTPFLLSPYMDSLRDFLFQQKQAQKTIYPPSKQIFNALNITPLDHVKVVILGQDPYHGPNQANGLSFSVQRGVALPPSLRNIFHELHTDLGVPISRHGDLTKWAEQGVLLLNSVLTVEAGQPTSHQKQGWEEFTDAVIDVLNEQREHIVFILWGAYAQRKGQRINREKHLVLTAAHPSPLAANRGGFFGCKVFSKTNQYLKQHGIEPIDWQLDA.

The Proton acceptor role is filled by aspartate 77.

It belongs to the uracil-DNA glycosylase (UDG) superfamily. UNG family.

The protein resides in the cytoplasm. The enzyme catalyses Hydrolyzes single-stranded DNA or mismatched double-stranded DNA and polynucleotides, releasing free uracil.. Functionally, excises uracil residues from the DNA which can arise as a result of misincorporation of dUMP residues by DNA polymerase or due to deamination of cytosine. This Acinetobacter baumannii (strain AB307-0294) protein is Uracil-DNA glycosylase.